A 297-amino-acid polypeptide reads, in one-letter code: Protease HtpX homolog (297 aa).

Helical transmembrane passes span 14 to 34 and 38 to 58; these read IVLLFVFFILVALVGAAVGYL and SLETGVVAAIVIGAIYTIIMV. His144 contacts Zn(2+). Glu145 is an active-site residue. His148 contributes to the Zn(2+) binding site. The next 2 membrane-spanning stretches (helical) occupy residues 159 to 179 and 199 to 219; these read IALALAAAITLLTNIGGNWWF and ILLLVFSILMMVLAPLAAAAI. Residue Glu228 coordinates Zn(2+).

This sequence belongs to the peptidase M48B family. The cofactor is Zn(2+).

Its subcellular location is the cell membrane. This Leuconostoc mesenteroides subsp. mesenteroides (strain ATCC 8293 / DSM 20343 / BCRC 11652 / CCM 1803 / JCM 6124 / NCDO 523 / NBRC 100496 / NCIMB 8023 / NCTC 12954 / NRRL B-1118 / 37Y) protein is Protease HtpX homolog.